A 261-amino-acid polypeptide reads, in one-letter code: Leucine-rich repeat-containing protein 61 (261 aa).

3 LRR repeats span residues 54–75 (GLEW…ASLR), 76–97 (QLAV…AACE), and 98–119 (NLQC…QCLA). One can recognise an LRRCT domain in the interval 138–183 (NPLCASPCYWASVRELLPGLKVLDGERVSGRGSDFYQLCRDLDSSL).

The chain is Leucine-rich repeat-containing protein 61 (LRRC61) from Bos taurus (Bovine).